We begin with the raw amino-acid sequence, 277 residues long: Large ribosomal subunit protein uL2 (277 aa).

The tract at residues 199–277 (DHMNTSVGKA…ILISRHKRKK (79 aa)) is disordered. Over residues 209–220 (GRTRWMGRRPHN) the composition is skewed to basic residues.

It belongs to the universal ribosomal protein uL2 family. Part of the 50S ribosomal subunit. Forms a bridge to the 30S subunit in the 70S ribosome.

One of the primary rRNA binding proteins. Required for association of the 30S and 50S subunits to form the 70S ribosome, for tRNA binding and peptide bond formation. It has been suggested to have peptidyltransferase activity; this is somewhat controversial. Makes several contacts with the 16S rRNA in the 70S ribosome. This Nitrobacter winogradskyi (strain ATCC 25391 / DSM 10237 / CIP 104748 / NCIMB 11846 / Nb-255) protein is Large ribosomal subunit protein uL2.